Here is a 483-residue protein sequence, read N- to C-terminus: Xylulose kinase (483 aa).

Residue 77–78 participates in substrate binding; that stretch reads MH. The Proton acceptor role is filled by aspartate 233.

This sequence belongs to the FGGY kinase family.

The enzyme catalyses D-xylulose + ATP = D-xylulose 5-phosphate + ADP + H(+). Its function is as follows. Catalyzes the phosphorylation of D-xylulose to D-xylulose 5-phosphate. The protein is Xylulose kinase of Klebsiella pneumoniae.